A 667-amino-acid polypeptide reads, in one-letter code: Probable E3 ubiquitin-protein ligase HIP1 (667 aa).

Disordered regions lie at residues 142 to 163 (NGASQGSELHGGCSHTGSNGQA) and 285 to 311 (TTAGLSSSSYDPSGGNNNSGGSQRSFR). Residues 288–309 (GLSSSSYDPSGGNNNSGGSQRS) show a composition bias toward low complexity. The RING-type; atypical zinc-finger motif lies at 620–661 (CCICQEEYVDGDDLGTLDCGHDFHVGCVRQWLVVKNTCPICK).

It belongs to the RING-type zinc finger family. In terms of assembly, interacts with HAL3.

It catalyses the reaction S-ubiquitinyl-[E2 ubiquitin-conjugating enzyme]-L-cysteine + [acceptor protein]-L-lysine = [E2 ubiquitin-conjugating enzyme]-L-cysteine + N(6)-ubiquitinyl-[acceptor protein]-L-lysine.. Its pathway is protein modification; protein ubiquitination. In terms of biological role, probable E3 ubiquitin-protein ligase that functions downstream of HAL3 and is required for HAL3-regulated plant growth. Activation of HIP1 by HAL3 may lead to the degradation of cell cycle suppressors, resulting in enhancement of cell division and plant growth. The polypeptide is Probable E3 ubiquitin-protein ligase HIP1 (HIP1) (Oryza sativa subsp. japonica (Rice)).